Here is a 149-residue protein sequence, read N- to C-terminus: Urease accessory protein UreE (149 aa).

Belongs to the UreE family.

It localises to the cytoplasm. Functionally, involved in urease metallocenter assembly. Binds nickel. Probably functions as a nickel donor during metallocenter assembly. The chain is Urease accessory protein UreE from Ruegeria pomeroyi (strain ATCC 700808 / DSM 15171 / DSS-3) (Silicibacter pomeroyi).